Reading from the N-terminus, the 58-residue chain is Small ribosomal subunit protein bS21 (58 aa).

Belongs to the bacterial ribosomal protein bS21 family.

The protein is Small ribosomal subunit protein bS21 of Lacticaseibacillus paracasei (strain ATCC 334 / BCRC 17002 / CCUG 31169 / CIP 107868 / KCTC 3260 / NRRL B-441) (Lactobacillus paracasei).